Here is a 498-residue protein sequence, read N- to C-terminus: ATP synthase subunit beta, chloroplastic (498 aa).

ATP is bound at residue 172-179 (GGAGVGKT).

This sequence belongs to the ATPase alpha/beta chains family. In terms of assembly, F-type ATPases have 2 components, CF(1) - the catalytic core - and CF(0) - the membrane proton channel. CF(1) has five subunits: alpha(3), beta(3), gamma(1), delta(1), epsilon(1). CF(0) has four main subunits: a(1), b(1), b'(1) and c(9-12).

It is found in the plastid. Its subcellular location is the chloroplast thylakoid membrane. The enzyme catalyses ATP + H2O + 4 H(+)(in) = ADP + phosphate + 5 H(+)(out). Its function is as follows. Produces ATP from ADP in the presence of a proton gradient across the membrane. The catalytic sites are hosted primarily by the beta subunits. This is ATP synthase subunit beta, chloroplastic from Nicotiana rustica (Aztec tobacco).